The chain runs to 372 residues: NAD(P)H-quinone oxidoreductase subunit 1 (372 aa).

8 helical membrane passes run 27–47, 97–117, 128–148, 176–196, 204–224, 254–274, 308–328, and 347–367; these read VLWMPLPMLLMIIAATVGVLV, FLFTIGPALVVIPVFLSYLIV, VGAGVFLWIALSSIQPIGLLM, LALAVLAVVMMSNSLSTIDIV, ILGWNIWRQPVGFIIFWIAAL, FALFYVGSYVNLILSALLVSI, ALGITMTVLKAYLLVFTAILL, and FLLPISLVNLLVTAALKLTFP.

The protein belongs to the complex I subunit 1 family. As to quaternary structure, NDH-1 is composed of at least 11 different subunits.

The protein localises to the cellular thylakoid membrane. The enzyme catalyses a plastoquinone + NADH + (n+1) H(+)(in) = a plastoquinol + NAD(+) + n H(+)(out). It carries out the reaction a plastoquinone + NADPH + (n+1) H(+)(in) = a plastoquinol + NADP(+) + n H(+)(out). In terms of biological role, NDH-1 shuttles electrons from an unknown electron donor, via FMN and iron-sulfur (Fe-S) centers, to quinones in the respiratory and/or the photosynthetic chain. The immediate electron acceptor for the enzyme in this species is believed to be plastoquinone. Couples the redox reaction to proton translocation, and thus conserves the redox energy in a proton gradient. This is NAD(P)H-quinone oxidoreductase subunit 1 from Synechococcus elongatus (strain ATCC 33912 / PCC 7942 / FACHB-805) (Anacystis nidulans R2).